The following is a 151-amino-acid chain: Cell division protein SepF (151 aa).

The span at 17–29 (DNEDDYQDQEDEQ) shows a compositional bias: acidic residues. The disordered stretch occupies residues 17–42 (DNEDDYQDQEDEQAQQPAPEQPVDNH).

It belongs to the SepF family. As to quaternary structure, homodimer. Interacts with FtsZ.

The protein resides in the cytoplasm. Cell division protein that is part of the divisome complex and is recruited early to the Z-ring. Probably stimulates Z-ring formation, perhaps through the cross-linking of FtsZ protofilaments. Its function overlaps with FtsA. This chain is Cell division protein SepF, found in Lacticaseibacillus casei (strain BL23) (Lactobacillus casei).